The following is a 274-amino-acid chain: Energy-coupling factor transporter ATP-binding protein EcfA (274 aa).

One can recognise an ABC transporter domain in the interval 2–235 (IRLENVSYNY…LSLRYLGLTP (234 aa)). 35-42 (GKNGSGKS) contacts ATP.

Belongs to the ABC transporter superfamily. Energy-coupling factor EcfA family. In terms of assembly, forms a stable energy-coupling factor (ECF) transporter complex composed of 2 membrane-embedded substrate-binding proteins (S component), 2 ATP-binding proteins (A component) and 2 transmembrane proteins (T component).

It is found in the cell membrane. In terms of biological role, ATP-binding (A) component of a common energy-coupling factor (ECF) ABC-transporter complex. Unlike classic ABC transporters this ECF transporter provides the energy necessary to transport a number of different substrates. This chain is Energy-coupling factor transporter ATP-binding protein EcfA, found in Methanosarcina acetivorans (strain ATCC 35395 / DSM 2834 / JCM 12185 / C2A).